The following is a 712-amino-acid chain: Polyadenylation factor subunit 2 (712 aa).

The interval 1 to 37 (MTAPTVPADQHGHPLPGPADPAANDTWRPSRYREPLH) is disordered. 7 WD repeats span residues 131-170 (KERS…YESI), 173-213 (VHDD…HGFQ), 214-253 (GHRE…EERS), 256-295 (GHGW…DLST), 298-337 (SSKS…ELEV), 340-380 (GHEK…PSTP), and 387-426 (AHED…GGQE). Disordered regions lie at residues 446–473 (TKRE…KQQV) and 489–712 (KTGP…DGRR). Gly residues-rich tracts occupy residues 460–469 (AGGGGGGGGD) and 494–504 (TTGGGPSGLPG). The span at 533-545 (QGQAQGGQFPRGR) shows a compositional bias: low complexity. A compositionally biased stretch (basic and acidic residues) spans 565 to 592 (FADRDRNGGGDRGGMDRDRDSRGGRQDP). 2 stretches are compositionally biased toward pro residues: residues 603–612 (GGPPPGPPPG) and 619–671 (PPAP…PQGP). A compositionally biased stretch (gly residues) spans 678–712 (GGQGNYGASASGGYGQYGGGGGGGGGGGYGRDGRR).

It localises to the nucleus. Its function is as follows. Required for 3'-end cleavage and polyadenylation of pre-mRNAs. Also involved in chromosome segregation where it has a role in chromosome attachment to the mitotic spindle. The protein is Polyadenylation factor subunit 2 (PFS2) of Cryptococcus neoformans var. neoformans serotype D (strain JEC21 / ATCC MYA-565) (Filobasidiella neoformans).